The primary structure comprises 67 residues: Large ribosomal subunit protein bL35 (67 aa).

The segment at 1-20 is disordered; it reads MPKLKTKSGAKKRFVPKKSG.

Belongs to the bacterial ribosomal protein bL35 family.

The chain is Large ribosomal subunit protein bL35 from Anaeromyxobacter dehalogenans (strain 2CP-1 / ATCC BAA-258).